The chain runs to 270 residues: Sulfur carrier protein FdhD (270 aa).

Catalysis depends on Cys-116, which acts as the Cysteine persulfide intermediate. A Mo-bis(molybdopterin guanine dinucleotide)-binding site is contributed by Phe-253–Lys-258.

The protein belongs to the FdhD family.

The protein resides in the cytoplasm. Functionally, required for formate dehydrogenase (FDH) activity. Acts as a sulfur carrier protein that transfers sulfur from IscS to the molybdenum cofactor prior to its insertion into FDH. The chain is Sulfur carrier protein FdhD from Haemophilus influenzae (strain 86-028NP).